The sequence spans 206 residues: Probable GTP-binding protein EngB (206 aa).

In terms of domain architecture, EngB-type G spans 23–197 (QGIEVAFAGR…ERVLDKWFGY (175 aa)). GTP is bound by residues 31 to 38 (GRSNAGKS), 58 to 62 (GRTQL), 76 to 79 (DLPG), 143 to 146 (TKAD), and 176 to 178 (FSS). Residues S38 and T60 each coordinate Mg(2+).

The protein belongs to the TRAFAC class TrmE-Era-EngA-EngB-Septin-like GTPase superfamily. EngB GTPase family. It depends on Mg(2+) as a cofactor.

Functionally, necessary for normal cell division and for the maintenance of normal septation. This chain is Probable GTP-binding protein EngB, found in Pseudoalteromonas atlantica (strain T6c / ATCC BAA-1087).